A 270-amino-acid chain; its full sequence is Putative phosphoenolpyruvate synthase regulatory protein (270 aa).

Position 149–156 (149–156 (GVSRSGKT)) interacts with ADP.

The protein belongs to the pyruvate, phosphate/water dikinase regulatory protein family. PSRP subfamily.

It carries out the reaction [pyruvate, water dikinase] + ADP = [pyruvate, water dikinase]-phosphate + AMP + H(+). The catalysed reaction is [pyruvate, water dikinase]-phosphate + phosphate + H(+) = [pyruvate, water dikinase] + diphosphate. In terms of biological role, bifunctional serine/threonine kinase and phosphorylase involved in the regulation of the phosphoenolpyruvate synthase (PEPS) by catalyzing its phosphorylation/dephosphorylation. In Alteromonas mediterranea (strain DSM 17117 / CIP 110805 / LMG 28347 / Deep ecotype), this protein is Putative phosphoenolpyruvate synthase regulatory protein.